A 614-amino-acid polypeptide reads, in one-letter code: DNA mismatch repair protein MutL (614 aa).

This sequence belongs to the DNA mismatch repair MutL/HexB family.

Its function is as follows. This protein is involved in the repair of mismatches in DNA. It is required for dam-dependent methyl-directed DNA mismatch repair. May act as a 'molecular matchmaker', a protein that promotes the formation of a stable complex between two or more DNA-binding proteins in an ATP-dependent manner without itself being part of a final effector complex. This Thermoanaerobacter pseudethanolicus (strain ATCC 33223 / 39E) (Clostridium thermohydrosulfuricum) protein is DNA mismatch repair protein MutL.